Here is a 381-residue protein sequence, read N- to C-terminus: Dual-specificity RNA methyltransferase RlmN (381 aa).

The active-site Proton acceptor is the glutamate 95. A Radical SAM core domain is found at 101-339 (DGRRGTLCVS…MTTVRTTRGD (239 aa)). Cysteine 108 and cysteine 345 form a disulfide bridge. The [4Fe-4S] cluster site is built by cysteine 115, cysteine 119, and cysteine 122. S-adenosyl-L-methionine contacts are provided by residues 169-170 (GE), serine 201, 223-225 (SLH), and asparagine 302. Cysteine 345 functions as the S-methylcysteine intermediate in the catalytic mechanism.

Belongs to the radical SAM superfamily. RlmN family. Requires [4Fe-4S] cluster as cofactor.

The protein localises to the cytoplasm. The catalysed reaction is adenosine(2503) in 23S rRNA + 2 reduced [2Fe-2S]-[ferredoxin] + 2 S-adenosyl-L-methionine = 2-methyladenosine(2503) in 23S rRNA + 5'-deoxyadenosine + L-methionine + 2 oxidized [2Fe-2S]-[ferredoxin] + S-adenosyl-L-homocysteine. The enzyme catalyses adenosine(37) in tRNA + 2 reduced [2Fe-2S]-[ferredoxin] + 2 S-adenosyl-L-methionine = 2-methyladenosine(37) in tRNA + 5'-deoxyadenosine + L-methionine + 2 oxidized [2Fe-2S]-[ferredoxin] + S-adenosyl-L-homocysteine. Functionally, specifically methylates position 2 of adenine 2503 in 23S rRNA and position 2 of adenine 37 in tRNAs. m2A2503 modification seems to play a crucial role in the proofreading step occurring at the peptidyl transferase center and thus would serve to optimize ribosomal fidelity. The chain is Dual-specificity RNA methyltransferase RlmN from Alcanivorax borkumensis (strain ATCC 700651 / DSM 11573 / NCIMB 13689 / SK2).